Reading from the N-terminus, the 339-residue chain is NADH-quinone oxidoreductase subunit H (339 aa).

9 helical membrane passes run 9–29 (IFPL…LILC), 50–70 (PNVV…KLLF), 82–102 (ILFI…WAVI), 115–135 (VGVL…IIAG), 161–181 (MGLV…SEII), 187–207 (MPWW…ISVL), 235–255 (MGFA…SAMT), 275–295 (IPGF…FLWI), and 311–331 (GWKV…SVLV).

It belongs to the complex I subunit 1 family. As to quaternary structure, NDH-1 is composed of 14 different subunits. Subunits NuoA, H, J, K, L, M, N constitute the membrane sector of the complex.

It localises to the cell membrane. The enzyme catalyses a quinone + NADH + 5 H(+)(in) = a quinol + NAD(+) + 4 H(+)(out). In terms of biological role, NDH-1 shuttles electrons from NADH, via FMN and iron-sulfur (Fe-S) centers, to quinones in the respiratory chain. The immediate electron acceptor for the enzyme in this species is believed to be ubiquinone. Couples the redox reaction to proton translocation (for every two electrons transferred, four hydrogen ions are translocated across the cytoplasmic membrane), and thus conserves the redox energy in a proton gradient. This subunit may bind ubiquinone. The sequence is that of NADH-quinone oxidoreductase subunit H from Rickettsia africae (strain ESF-5).